A 211-amino-acid polypeptide reads, in one-letter code: Interleukin-6 (211 aa).

The signal sequence occupies residues methionine 1 to alanine 24. 2 cysteine pairs are disulfide-bonded: cysteine 70–cysteine 76 and cysteine 99–cysteine 109.

The protein belongs to the IL-6 superfamily. In terms of assembly, component of a hexamer of two molecules each of IL6, IL6R and IL6ST; first binds to IL6R to associate with the signaling subunit IL6ST. Interacts with IL6R (via the N-terminal ectodomain); this interaction may be affected by IL6R-binding with SORL1, hence decreasing IL6 cis signaling. Interacts with SORL1 (via the N-terminal ectodomain); this interaction leads to IL6 internalization and lysosomal degradation. May form a trimeric complex with the soluble SORL1 ectodomain and soluble IL6R receptor; this interaction might stabilize circulating IL6, hence promoting IL6 trans signaling. Post-translationally, N- and O-glycosylated. In terms of tissue distribution, expressed by dendritic cells and macrophages. Expressed by activated follicular B cells. Abundantly expressed in the central nervous system (CNS), particularly the hypothalamic region.

The protein localises to the secreted. Functionally, cytokine with a wide variety of biological functions in immunity, tissue regeneration, and metabolism. Binds to IL6R, then the complex associates to the signaling subunit IL6ST/gp130 to trigger the intracellular IL6-signaling pathway. The interaction with the membrane-bound IL6R and IL6ST stimulates 'classic signaling', whereas the binding of IL6 and soluble IL6R to IL6ST stimulates 'trans-signaling'. Alternatively, 'cluster signaling' occurs when membrane-bound IL6:IL6R complexes on transmitter cells activate IL6ST receptors on neighboring receiver cells. IL6 is a potent inducer of the acute phase response. Rapid production of IL6 contributes to host defense during infection and tissue injury, but excessive IL6 synthesis is involved in disease pathology. In the innate immune response, is synthesized by myeloid cells, such as macrophages and dendritic cells, upon recognition of pathogens through toll-like receptors (TLRs) at the site of infection or tissue injury. In the adaptive immune response, is required for the differentiation of B-cells into immunoglolin-secreting cells. Plays a major role in the differentiation of CD4(+) T cell subsets. Essential factor for the development of T follicular helper (Tfh) cells that are required for the induction of germinal-center formation. Together with IL21, controls the early generation of Tfh cells and are critical for an effective antibody response to acute viral infection. Required to drive naive CD4(+) T cells to the Th17 lineage, through 'cluster signaling' by dendritic cells. Also required for proliferation of myeloma cells and the survival of plasmablast cells. In terms of biological role, acts as an essential factor in bone homeostasis and on vessels directly or indirectly by induction of VEGF, resulting in increased angiogenesis activity and vascular permeability. Induces, through 'trans-signaling' and synergistically with IL1B and TNF, the production of VEGF. Involved in metabolic controls, is discharged into the bloodstream after muscle contraction increasing lipolysis and improving insulin resistance. 'Trans-signaling' in central nervous system regulates energy and glucose homeostasis. Mediates, through GLP-1, crosstalk between insulin-sensitive tissues, intestinal L cells and pancreatic islets to adapt to changes in insulin demand. Also acts as a myokine. Plays a protective role during liver injury, being required for maintenance of tissue regeneration. Also has a pivotal role in iron metabolism by regulating HAMP/hepcidin expression upon inflammation or bacterial infection. Through activation of IL6ST-YAP-NOTCH pathway, induces inflammation-induced epithelial regeneration. The sequence is that of Interleukin-6 from Mus musculus (Mouse).